The chain runs to 273 residues: Chondrolectin (273 aa).

An N-terminal signal peptide occupies residues 1–21 (MIRIASLLLGAALLCAQGAFA). The Extracellular portion of the chain corresponds to 22–216 (RRVVSGQKVC…VVTEAGIIPN (195 aa)). One can recognise a C-type lectin domain in the interval 35-179 (VKHPCYKMAY…CNMKHNYICK (145 aa)). Intrachain disulfides connect cysteine 61/cysteine 178 and cysteine 144/cysteine 170. Asparagine 86 carries an N-linked (GlcNAc...) asparagine glycan. Residues 217 to 237 (LIYVIIPTIPLLLLILVALGT) form a helical membrane-spanning segment. Residues 238–273 (CCFQMLHKSKGRSKTSPNQSTLWISKSTRKESGMEV) are Cytoplasmic-facing. A disordered region spans residues 247–273 (KGRSKTSPNQSTLWISKSTRKESGMEV). A compositionally biased stretch (polar residues) spans 251 to 263 (KTSPNQSTLWISK).

Interacts with RABGGTB. In adult mice preferentially expressed in skeletal muscle, testis, brain, and lung. Expressed in striated muscle (at protein level). Expressed in spinal cord. Detected in spinal cord fast motor neurons (at protein level).

The protein localises to the membrane. In terms of biological role, may play a role in the development of the nervous system such as in neurite outgrowth and elongation. May be involved in motor axon growth and guidance. The chain is Chondrolectin (Chodl) from Mus musculus (Mouse).